The following is a 250-amino-acid chain: 1-(5-phosphoribosyl)-5-[(5-phosphoribosylamino)methylideneamino] imidazole-4-carboxamide isomerase (250 aa).

Asp8 acts as the Proton acceptor in catalysis. Asp131 (proton donor) is an active-site residue.

It belongs to the HisA/HisF family.

The protein localises to the cytoplasm. It carries out the reaction 1-(5-phospho-beta-D-ribosyl)-5-[(5-phospho-beta-D-ribosylamino)methylideneamino]imidazole-4-carboxamide = 5-[(5-phospho-1-deoxy-D-ribulos-1-ylimino)methylamino]-1-(5-phospho-beta-D-ribosyl)imidazole-4-carboxamide. Its pathway is amino-acid biosynthesis; L-histidine biosynthesis; L-histidine from 5-phospho-alpha-D-ribose 1-diphosphate: step 4/9. This is 1-(5-phosphoribosyl)-5-[(5-phosphoribosylamino)methylideneamino] imidazole-4-carboxamide isomerase from Paraburkholderia phytofirmans (strain DSM 17436 / LMG 22146 / PsJN) (Burkholderia phytofirmans).